Here is a 1076-residue protein sequence, read N- to C-terminus: JmjC domain-containing histone demethylation protein 1 (1076 aa).

The JmjC domain maps to Phe93–Asn265. Thr159 lines the substrate pocket. Residues His162 and Asp164 each coordinate Fe cation. Lys179 lines the substrate pocket. A Fe cation-binding site is contributed by His233. Disordered regions lie at residues Phe598–Val748 and Lys789–Ser1056. The span at Asp610–Ala634 shows a compositional bias: acidic residues. Positions Ala653–Arg680 are enriched in basic and acidic residues. The span at Arg681–Glu698 shows a compositional bias: basic residues. Composition is skewed to basic and acidic residues over residues Arg699–Ala714 and Lys789–His811. A compositionally biased stretch (low complexity) spans Ala935–Ser946. Polar residues-rich tracts occupy residues Phe957–Arg990 and Asp1004–Thr1019. A compositionally biased stretch (basic and acidic residues) spans Gln1044–Ser1056.

This sequence belongs to the JHDM1 histone demethylase family. Fe(2+) is required as a cofactor.

The protein localises to the nucleus. It catalyses the reaction N(6),N(6)-dimethyl-L-lysyl(36)-[histone H3] + 2 2-oxoglutarate + 2 O2 = L-lysyl(36)-[histone H3] + 2 formaldehyde + 2 succinate + 2 CO2. Functionally, histone demethylase that specifically demethylates 'Lys-36' of histone H3, thereby playing a central role in histone code. Has a role in regulating lifespan. In Caenorhabditis elegans, this protein is JmjC domain-containing histone demethylation protein 1 (jhdm-1).